Here is a 181-residue protein sequence, read N- to C-terminus: GTP cyclohydrolase 1 2 (181 aa).

It belongs to the GTP cyclohydrolase I family. Homomer.

The enzyme catalyses GTP + H2O = 7,8-dihydroneopterin 3'-triphosphate + formate + H(+). The protein operates within cofactor biosynthesis; 7,8-dihydroneopterin triphosphate biosynthesis; 7,8-dihydroneopterin triphosphate from GTP: step 1/1. In Pseudomonas aeruginosa (strain ATCC 15692 / DSM 22644 / CIP 104116 / JCM 14847 / LMG 12228 / 1C / PRS 101 / PAO1), this protein is GTP cyclohydrolase 1 2 (folE2).